A 357-amino-acid polypeptide reads, in one-letter code: tRNA N6-adenosine threonylcarbamoyltransferase (357 aa).

Fe cation contacts are provided by histidine 116 and histidine 120. Substrate contacts are provided by residues 139–143, aspartate 172, glycine 185, and asparagine 284; that span reads LVSGG. Aspartate 312 lines the Fe cation pocket.

It belongs to the KAE1 / TsaD family. It depends on Fe(2+) as a cofactor.

The protein resides in the cytoplasm. It carries out the reaction L-threonylcarbamoyladenylate + adenosine(37) in tRNA = N(6)-L-threonylcarbamoyladenosine(37) in tRNA + AMP + H(+). Required for the formation of a threonylcarbamoyl group on adenosine at position 37 (t(6)A37) in tRNAs that read codons beginning with adenine. Is involved in the transfer of the threonylcarbamoyl moiety of threonylcarbamoyl-AMP (TC-AMP) to the N6 group of A37, together with TsaE and TsaB. TsaD likely plays a direct catalytic role in this reaction. In Synechococcus sp. (strain CC9605), this protein is tRNA N6-adenosine threonylcarbamoyltransferase.